Consider the following 376-residue polypeptide: Glutamate 5-kinase (376 aa).

Lysine 18 provides a ligand contact to ATP. Substrate is bound by residues serine 58, aspartate 145, and asparagine 157. Residues 177–178 (SD) and 218–224 (TGGMASK) each bind ATP. One can recognise a PUA domain in the interval 280–358 (TGALTLDAGA…SELPGELRRP (79 aa)).

The protein belongs to the glutamate 5-kinase family.

It is found in the cytoplasm. The catalysed reaction is L-glutamate + ATP = L-glutamyl 5-phosphate + ADP. It functions in the pathway amino-acid biosynthesis; L-proline biosynthesis; L-glutamate 5-semialdehyde from L-glutamate: step 1/2. Catalyzes the transfer of a phosphate group to glutamate to form L-glutamate 5-phosphate. The protein is Glutamate 5-kinase of Mycobacterium tuberculosis (strain ATCC 25177 / H37Ra).